The primary structure comprises 509 residues: Maturase K (509 aa).

Belongs to the intron maturase 2 family. MatK subfamily.

The protein resides in the plastid. Its subcellular location is the chloroplast. Its function is as follows. Usually encoded in the trnK tRNA gene intron. Probably assists in splicing its own and other chloroplast group II introns. The sequence is that of Maturase K from Vatairea macrocarpa.